Reading from the N-terminus, the 377-residue chain is Guanine nucleotide exchange factor for Rab-3A (377 aa).

Positions 23–57 (WKNLGPSKGNRKSPGGLVEASASWEEAGGEEHPAA) are disordered. Positions 77-128 (SEFLKEELYKAQKELKLKDEECERLCKVRAQLEQELEELTASLFEEAHKMVR) form a coiled coil. Positions 167 to 198 (PASPNRELHPQLLSPTKAGPRKGHSRQKSTSS) are disordered. Phosphoserine occurs at positions 169 and 180.

It belongs to the SEC2 family. In terms of assembly, interacts with RAB3A and IHPK1 through the coiled-coil domain. This interaction is competitive. IHPK1 kinase activity is not required for this interaction. As to expression, selectively localized to the brain (at protein level).

Its function is as follows. Guanine nucleotide exchange factor (GEF) which may activate RAB3A, a GTPase that regulates synaptic vesicle exocytosis. Promotes the exchange of GDP to GTP, converting inactive GDP-bound Rab proteins into their active GTP-bound form. May also activate RAB8A and RAB8B. The polypeptide is Guanine nucleotide exchange factor for Rab-3A (Rab3il1) (Rattus norvegicus (Rat)).